The following is a 343-amino-acid chain: N-acetyl-gamma-glutamyl-phosphate reductase (343 aa).

Residue Cys-149 is part of the active site.

The protein belongs to the NAGSA dehydrogenase family. Type 1 subfamily.

The protein resides in the cytoplasm. It catalyses the reaction N-acetyl-L-glutamate 5-semialdehyde + phosphate + NADP(+) = N-acetyl-L-glutamyl 5-phosphate + NADPH + H(+). It participates in amino-acid biosynthesis; L-arginine biosynthesis; N(2)-acetyl-L-ornithine from L-glutamate: step 3/4. Its function is as follows. Catalyzes the NADPH-dependent reduction of N-acetyl-5-glutamyl phosphate to yield N-acetyl-L-glutamate 5-semialdehyde. This is N-acetyl-gamma-glutamyl-phosphate reductase from Methanococcus maripaludis (strain C5 / ATCC BAA-1333).